The chain runs to 77 residues: uncharacterized protein (77 aa).

This is an uncharacterized protein from Homo sapiens (Human).